Reading from the N-terminus, the 98-residue chain is ESAT-6-like protein EsxM (98 aa).

The protein belongs to the WXG100 family. CFP-10 subfamily.

It localises to the secreted. Its function is as follows. Alters the host macrophage cytoskeleton and enhances macrophage motility. Promotes granuloma efflux, extrapulmonary dissemination of infection and bone disease. The sequence is that of ESAT-6-like protein EsxM from Mycobacterium marinum (strain ATCC BAA-535 / M).